The sequence spans 334 residues: HTH-type transcriptional regulator RegA (334 aa).

Residues 1 to 57 (MAASIKDVAREARVSIATVSRVLNNVDVVNEETKKKVMEAIKKLDYRPNIVARSLKT) enclose the HTH lacI-type domain. A DNA-binding region (H-T-H motif) is located at residues 5–24 (IKDVAREARVSIATVSRVLN).

Functionally, involved in the regulation of amylase production. This chain is HTH-type transcriptional regulator RegA (regA), found in Clostridium acetobutylicum (strain ATCC 824 / DSM 792 / JCM 1419 / IAM 19013 / LMG 5710 / NBRC 13948 / NRRL B-527 / VKM B-1787 / 2291 / W).